The chain runs to 559 residues: MSNESIYSVLDLTQVIFEDRYLVKQKLGDGSFGTVYLAQRKEKNGLYETVAVKKLKNSSKPKPKHELLKLRESLALRKISKHPCLIDLLETFMDPYRNIFLVMEFMDCNLFQLFKRRQGRLFTKETAFNILLQIISGIEHIHKHGFMHRDIKPENILVKRISPKPISSRYSIKLGDFGLARPSVSSDPLTEYVSTRWYRAPELLLRSGSYNHSVDLYAFGCIVFEIYSLKPLFPGRNETDQLNRVCEILGNPGIDELDTLHYWSQAKELAKRLGFMLPPTKPYPIQKLLPQNCPEGHAKMIPCLLAWNPDVRPTAKYCKEVFFPLPPSASKSNSVPQKISNPKVEQNLGFPISREDKKSTRRVGWLKKNLSEFVSSVKSVFPDSHGSQPHVKTEKPINAKESTGHLANPIASSNVPAISLKPGELHESVFFSENEQIDYLLTSIDYLPSYKPPSNGSNIAINAFNETVGDRIPSSKDILITEKIPFKKENEIRDSIVPSCSQPDESNKEGVASCLLLQKSGMEMTSVLEYSTPNPAEVQNICNDHAKFETSKSLHLSSP.

Positions 21–323 constitute a Protein kinase domain; that stretch reads YLVKQKLGDG…TAKYCKEVFF (303 aa). ATP is bound by residues 27–35 and lysine 53; that span reads LGDGSFGTV. Residue aspartate 150 is the Proton acceptor of the active site.

Belongs to the protein kinase superfamily. Ser/Thr protein kinase family.

It carries out the reaction L-seryl-[protein] + ATP = O-phospho-L-seryl-[protein] + ADP + H(+). The catalysed reaction is L-threonyl-[protein] + ATP = O-phospho-L-threonyl-[protein] + ADP + H(+). Protein kinase which is essential for spore formation. This is Sporulation protein kinase mde3 (mde3) from Schizosaccharomyces pombe (strain 972 / ATCC 24843) (Fission yeast).